Consider the following 334-residue polypeptide: MLYSLARPMLFSLAPERAHELTLSMLDKAHKLGIMRQTVEAKPTTCMGIEFPNPVGLAAGLDKNGAHIDALAGLGFGFIEIGTITPHPQSGNPKPRLFRIPEAKAIINRMGFNNDGVDKLIENVKASKFRGILGINIGKNADTPVEKAVDDYLICLEKVYNYASYITVNISSPNTKNLRSLQSGDALTELLQALKARQLELAEQYNHYVPLVLKVAPDLTAEDVEFISAQLLDFKIDGLIVTNTTLSREGVENLPYGNESGGLSGAPVFEKSTECLRLFAQTLKGQISLIGVGGILSGEQAAAKQQAGATLVQIYSGLIYTGPTLVKQCVEAMT.

Residues 59-63 (AGLDK) and Thr-83 contribute to the FMN site. Position 63 (Lys-63) interacts with substrate. Substrate is bound at residue 108 to 112 (NRMGF). The FMN site is built by Asn-136 and Asn-169. Asn-169 contacts substrate. Ser-172 acts as the Nucleophile in catalysis. Asn-174 provides a ligand contact to substrate. FMN contacts are provided by Lys-214 and Thr-242. Residue 243 to 244 (NT) participates in substrate binding. Residues Gly-265, Gly-294, and 315–316 (YS) contribute to the FMN site.

Belongs to the dihydroorotate dehydrogenase family. Type 2 subfamily. In terms of assembly, monomer. FMN is required as a cofactor.

Its subcellular location is the cell membrane. It carries out the reaction (S)-dihydroorotate + a quinone = orotate + a quinol. It participates in pyrimidine metabolism; UMP biosynthesis via de novo pathway; orotate from (S)-dihydroorotate (quinone route): step 1/1. In terms of biological role, catalyzes the conversion of dihydroorotate to orotate with quinone as electron acceptor. This is Dihydroorotate dehydrogenase (quinone) from Acinetobacter baumannii (strain SDF).